The sequence spans 544 residues: MAARIIKFDQEGRNAILKGVNTLADAVKVTLGPKGRNVVIEKAFGSPLITKDGVTVAKEIELEDKFENMGAQLVKEVASKTSDVAGDGTTTATVLAQAIYRQGSKLVAAGHNPMEIKRGIDKAVETIVAELKSISKPIKDHKEIAQVGTISANNDKTIGDIIAQAMEKVGKEGVITVEEAKAMETSLETVEGMQFDRGYLSPYFVTDPERMEASLENAMILIHDKKISNMKDLLPVLEQTAKSGRPLLIIAEDIEGEALATLVVNKLRGVLNICAVKAPGFGDRRKAMLEDIAILTGGQVISEEIGNKLENTTMDMLGRAKRITVDKDNTTIIDGDGKEADIQGRVKQIRAQIEETTSDYDREKLQERLAKLVGGVAVIKVGAATETEMKEKKARVEDALHATRAAVDEGIVPGGGVAYLRALASLDALSLPTEQQFGVNVIKRSLEEPIRQIAQNAGVDGSIVVDKVKNSKDAFGYNAAEDEYVDMLAAGIIDPTKVSRSALQNAASVAGLMLTTEAMIADKPKEEAPMPAMPGGMGGMGGMM.

Residues 30–33 (TLGP), K51, 87–91 (DGTTT), G415, 478–480 (NAA), and D494 contribute to the ATP site.

This sequence belongs to the chaperonin (HSP60) family. As to quaternary structure, forms a cylinder of 14 subunits composed of two heptameric rings stacked back-to-back. Interacts with the co-chaperonin GroES.

It localises to the cytoplasm. The enzyme catalyses ATP + H2O + a folded polypeptide = ADP + phosphate + an unfolded polypeptide.. Functionally, together with its co-chaperonin GroES, plays an essential role in assisting protein folding. The GroEL-GroES system forms a nano-cage that allows encapsulation of the non-native substrate proteins and provides a physical environment optimized to promote and accelerate protein folding. This is Chaperonin GroEL from Geobacter sulfurreducens (strain ATCC 51573 / DSM 12127 / PCA).